The following is a 301-amino-acid chain: Probable alpha-L-glutamate ligase (301 aa).

The region spanning 104–287 is the ATP-grasp domain; that stretch reads LQLLSRKGIG…VAGMIFDFIE (184 aa). ATP is bound by residues lysine 141, 178–179, aspartate 187, and 211–213; these read EF and RSN. Residues aspartate 248, glutamate 260, and asparagine 262 each contribute to the Mg(2+) site. Positions 248, 260, and 262 each coordinate Mn(2+).

This sequence belongs to the RimK family. Mg(2+) is required as a cofactor. Mn(2+) serves as cofactor.

This is Probable alpha-L-glutamate ligase from Vibrio parahaemolyticus serotype O3:K6 (strain RIMD 2210633).